Reading from the N-terminus, the 505-residue chain is Glycerol kinase (505 aa).

T14 is a binding site for ADP. Residues T14, T15, and S16 each coordinate ATP. T14 lines the sn-glycerol 3-phosphate pocket. R18 contacts ADP. Residues R84, E85, Y136, and D246 each contribute to the sn-glycerol 3-phosphate site. Residues R84, E85, Y136, D246, and Q247 each contribute to the glycerol site. Residues T268 and G311 each coordinate ADP. Residues T268, G311, Q315, and G412 each coordinate ATP. G412 and N416 together coordinate ADP.

The protein belongs to the FGGY kinase family.

The enzyme catalyses glycerol + ATP = sn-glycerol 3-phosphate + ADP + H(+). It functions in the pathway polyol metabolism; glycerol degradation via glycerol kinase pathway; sn-glycerol 3-phosphate from glycerol: step 1/1. Inhibited by fructose 1,6-bisphosphate (FBP). Its function is as follows. Key enzyme in the regulation of glycerol uptake and metabolism. Catalyzes the phosphorylation of glycerol to yield sn-glycerol 3-phosphate. The polypeptide is Glycerol kinase (Vibrio cholerae serotype O1 (strain M66-2)).